The following is a 134-amino-acid chain: T-cell receptor beta chain V region CTL-F3 (134 aa).

An N-terminal signal peptide occupies residues 1 to 19 (MAPRLLFCLVLCFLRAEPT). The interval 20-115 (NAGVIQTPRH…SAVYLCASSL (96 aa)) is v segment. A disulfide bond links C42 and C111. N-linked (GlcNAc...) asparagine glycosylation occurs at N90. The d segment stretch occupies residues 116–119 (STGV). Positions 120 to 134 (SYEQYFGPGTRLTVL) are j segment.

The polypeptide is T-cell receptor beta chain V region CTL-F3 (Mus musculus (Mouse)).